The chain runs to 746 residues: Disintegrin and metalloproteinase domain-containing protein 18 (746 aa).

A signal peptide spans 1-16; the sequence is MFFLLALLTELGRLQA. Residues 17–183 constitute a propeptide that is removed on maturation; sequence HVGSEGIFLH…QKKNLSKLLP (167 aa). N36, N122, N149, N156, N177, and N294 each carry an N-linked (GlcNAc...) asparagine glycan. At 177–687 the chain is on the extracellular side; it reads NLSKLLPQYL…EKGYNAHWNN (511 aa). The region spanning 184 to 381 is the Peptidase M12B domain; it reads QYLEIYIIVE…FEAKCLQKLS (198 aa). Intrachain disulfides connect C293–C376, C335–C360, C337–C342, and C450–C471. 4 N-linked (GlcNAc...) asparagine glycosylation sites follow: N359, N465, N611, and N625. Residues 390–479 enclose the Disintegrin domain; it reads QPVCGNGILE…DCVPDTYALN (90 aa). The EGF-like domain maps to 620-654; the sequence is TGYNCNTTTKCKGKGICNNFGNCQCFPGHKPPDCK. 3 disulfides stabilise this stretch: C624-C636, C630-C642, and C644-C653. Residues 688–708 traverse the membrane as a helical segment; the sequence is WFILSFYIVLPFFIIFTIVIF. Over 709–746 the chain is Cytoplasmic; it reads KRNEIRKLCNRENTELIHPLYQKAMMWNINIAQNFRSK.

Post-translationally, the prodomain and the metalloprotease-like domain are cleaved during the epididymal maturation of the spermatozoa. Expressed predominantly in adult and prepubertal testis.

It localises to the membrane. In terms of biological role, sperm surface membrane protein that may be involved in spermatogenesis and fertilization. This is a non catalytic metalloprotease-like protein. The sequence is that of Disintegrin and metalloproteinase domain-containing protein 18 (ADAM18) from Macaca fascicularis (Crab-eating macaque).